A 202-amino-acid chain; its full sequence is Protein DCV1 (202 aa).

Residues 1-18 (MLNYKLILLFSSFLQLIS) form the signal peptide. 3 consecutive transmembrane segments (helical) span residues 91–107 (IGGL…LTFI), 137–155 (ILTL…LLCM), and 168–189 (LVWL…FLSF).

It localises to the membrane. The sequence is that of Protein DCV1 (DCV1) from Saccharomyces cerevisiae (strain ATCC 204508 / S288c) (Baker's yeast).